The sequence spans 263 residues: Indole-3-glycerol phosphate synthase (263 aa).

This sequence belongs to the TrpC family.

The enzyme catalyses 1-(2-carboxyphenylamino)-1-deoxy-D-ribulose 5-phosphate + H(+) = (1S,2R)-1-C-(indol-3-yl)glycerol 3-phosphate + CO2 + H2O. It participates in amino-acid biosynthesis; L-tryptophan biosynthesis; L-tryptophan from chorismate: step 4/5. This is Indole-3-glycerol phosphate synthase from Polaromonas naphthalenivorans (strain CJ2).